A 115-amino-acid chain; its full sequence is NADH-ubiquinone oxidoreductase chain 3 (115 aa).

A run of 3 helical transmembrane segments spans residues 4-24 (LLVL…AFWL), 55-75 (FFLV…LLPL), and 87-107 (MTLT…YEWL).

It belongs to the complex I subunit 3 family. In terms of assembly, core subunit of respiratory chain NADH dehydrogenase (Complex I) which is composed of 45 different subunits. Interacts with TMEM186. Interacts with TMEM242.

It localises to the mitochondrion inner membrane. The catalysed reaction is a ubiquinone + NADH + 5 H(+)(in) = a ubiquinol + NAD(+) + 4 H(+)(out). Functionally, core subunit of the mitochondrial membrane respiratory chain NADH dehydrogenase (Complex I) which catalyzes electron transfer from NADH through the respiratory chain, using ubiquinone as an electron acceptor. Essential for the catalytic activity of complex I. This chain is NADH-ubiquinone oxidoreductase chain 3, found in Peromyscus eremicus (Cactus mouse).